The following is an 861-amino-acid chain: Interleukin-12 receptor subunit beta-2 (861 aa).

A signal peptide spans 1-23; the sequence is MARTVCGCSWALIFIIMSLLVKA. Residues 24 to 622 are Extracellular-facing; it reads KIDVCKRGDV…REFCLQGKAN (599 aa). N-linked (GlcNAc...) asparagine glycans are attached at residues Asn-48, Asn-129, Asn-166, and Asn-271. Fibronectin type-III domains lie at 126 to 224, 226 to 317, 318 to 415, 423 to 520, and 521 to 620; these read QPQN…VVRP, PPWD…TQTP, EKEP…NIAD, APQQ…KHKA, and PLSG…LQGK. A WSXWS motif motif is present at residues 305 to 309; sequence WSDWS. N-linked (GlcNAc...) asparagine glycans are attached at residues Asn-347, Asn-376, and Asn-480. A helical transmembrane segment spans residues 623-643; it reads WSTFVAPSICIAVITVGVFSM. Residues 644–861 are Cytoplasmic-facing; that stretch reads RCFRQKVFVL…LKMGCGSLML (218 aa). The short motif at 662–670 is the Box 1 motif element; the sequence is CSREIPDPA. Positions 718–761 are disordered; it reads FRRPHHPNWPGKGQRLQGRHASEEDTGSSASSPPPPRALTAETG. Tyr-800 is subject to Phosphotyrosine.

It belongs to the type I cytokine receptor family. Type 2 subfamily. Heterodimer/heterooligomer; disulfide-linked. The functional high affinity IL12 receptor is composed of I12RB1 and IL12RB2. Il12RB2 binds JAK2 (via its N-terminal) through a membrane-proximal region of the cytoplasmic domain. Post-translationally, on IL12 stimulation, phosphorylated on C-terminal tyrosine residues.

Its subcellular location is the membrane. In terms of biological role, receptor for interleukin-12. This subunit is the signaling component coupling to the JAK2/STAT4 pathway. The protein is Interleukin-12 receptor subunit beta-2 (IL12RB2) of Sus scrofa (Pig).